The chain runs to 265 residues: Sulfur carrier protein FdhD (265 aa).

Residue Cys107 is the Cysteine persulfide intermediate of the active site.

This sequence belongs to the FdhD family.

It is found in the cytoplasm. Required for formate dehydrogenase (FDH) activity. Acts as a sulfur carrier protein that transfers sulfur from IscS to the molybdenum cofactor prior to its insertion into FDH. In Staphylococcus aureus (strain JH9), this protein is Sulfur carrier protein FdhD.